Consider the following 359-residue polypeptide: 3-dehydroquinate synthase (359 aa).

Residues 71–76 (DGEAHK), 105–109 (GVIGD), 129–130 (TT), Lys142, Lys151, and 169–172 (TLHT) contribute to the NAD(+) site. Residues Glu184, His247, and His264 each coordinate Zn(2+).

Belongs to the sugar phosphate cyclases superfamily. Dehydroquinate synthase family. Requires NAD(+) as cofactor. Co(2+) is required as a cofactor. It depends on Zn(2+) as a cofactor.

It is found in the cytoplasm. The catalysed reaction is 7-phospho-2-dehydro-3-deoxy-D-arabino-heptonate = 3-dehydroquinate + phosphate. The protein operates within metabolic intermediate biosynthesis; chorismate biosynthesis; chorismate from D-erythrose 4-phosphate and phosphoenolpyruvate: step 2/7. Its function is as follows. Catalyzes the conversion of 3-deoxy-D-arabino-heptulosonate 7-phosphate (DAHP) to dehydroquinate (DHQ). In Neisseria meningitidis serogroup A / serotype 4A (strain DSM 15465 / Z2491), this protein is 3-dehydroquinate synthase.